Consider the following 183-residue polypeptide: Ribosome rescue factor SmrB (183 aa).

Residues 98 to 173 (LDLHGLTQQQ…GDAALLVLIE (76 aa)) enclose the Smr domain.

It belongs to the SmrB family. In terms of assembly, associates with collided ribosomes, but not with correctly translating polysomes.

In terms of biological role, acts as a ribosome collision sensor. Detects stalled/collided disomes (pairs of ribosomes where the leading ribosome is stalled and a second ribosome has collided with it) and endonucleolytically cleaves mRNA at the 5' boundary of the stalled ribosome. Stalled/collided disomes form a new interface (primarily via the 30S subunits) that binds SmrB. Cleaved mRNA becomes available for tmRNA ligation, leading to ribosomal subunit dissociation and rescue of stalled ribosomes. The chain is Ribosome rescue factor SmrB from Klebsiella pneumoniae (strain 342).